A 228-amino-acid polypeptide reads, in one-letter code: Uracil-DNA glycosylase (228 aa).

The active-site Proton acceptor is Asp71.

It belongs to the uracil-DNA glycosylase (UDG) superfamily. UNG family.

It localises to the cytoplasm. The catalysed reaction is Hydrolyzes single-stranded DNA or mismatched double-stranded DNA and polynucleotides, releasing free uracil.. Excises uracil residues from the DNA which can arise as a result of misincorporation of dUMP residues by DNA polymerase or due to deamination of cytosine. This is Uracil-DNA glycosylase from Thermobifida fusca (strain YX).